Reading from the N-terminus, the 164-residue chain is Protein CURVATURE THYLAKOID 1A, chloroplastic (164 aa).

Residues Met1–Arg62 constitute a chloroplast transit peptide. An N-acetylalanine modification is found at Ala63. Residues Ala63–Val93 are Stromal-facing. The chain crosses the membrane as a helical span at residues Leu94 to Ile114. Residues Asn115 to Ser116 are Lumenal-facing. The helical transmembrane segment at Val117 to Tyr137 threads the bilayer. The Stromal segment spans residues Arg138–Glu164. A coiled-coil region spans residues Leu140–Glu164.

It belongs to the CURT family. In terms of assembly, homo- and heterodimers and trimers.

It localises to the plastid. The protein localises to the chloroplast. The protein resides in the plastoglobule. It is found in the membrane. Its subcellular location is the chloroplast thylakoid membrane. In terms of biological role, determines thylakoid architecture by inducing membrane curvature. The polypeptide is Protein CURVATURE THYLAKOID 1A, chloroplastic (CURT1A) (Arabidopsis thaliana (Mouse-ear cress)).